The chain runs to 38 residues: Large ribosomal subunit protein bL36 (38 aa).

Belongs to the bacterial ribosomal protein bL36 family.

The sequence is that of Large ribosomal subunit protein bL36 from Baumannia cicadellinicola subsp. Homalodisca coagulata.